Reading from the N-terminus, the 190-residue chain is Thymidylate kinase (190 aa).

Residue 7–14 participates in ATP binding; it reads GVDTCGKS.

Belongs to the thymidylate kinase family.

The catalysed reaction is dTMP + ATP = dTDP + ADP. Functionally, phosphorylation of dTMP to form dTDP in both de novo and salvage pathways of dTTP synthesis. The polypeptide is Thymidylate kinase (Wolinella succinogenes (strain ATCC 29543 / DSM 1740 / CCUG 13145 / JCM 31913 / LMG 7466 / NCTC 11488 / FDC 602W) (Vibrio succinogenes)).